A 344-amino-acid polypeptide reads, in one-letter code: Adenine deaminase (344 aa).

Residues H24, H26, and H204 each contribute to the Zn(2+) site. The active-site Proton donor is E207. Residue D285 participates in Zn(2+) binding. D286 lines the substrate pocket.

This sequence belongs to the metallo-dependent hydrolases superfamily. Adenosine and AMP deaminases family. Adenine deaminase type 2 subfamily. Requires Zn(2+) as cofactor.

The catalysed reaction is adenine + H2O + H(+) = hypoxanthine + NH4(+). Functionally, catalyzes the hydrolytic deamination of adenine to hypoxanthine. Plays an important role in the purine salvage pathway and in nitrogen catabolism. The protein is Adenine deaminase of Caulobacter vibrioides (strain ATCC 19089 / CIP 103742 / CB 15) (Caulobacter crescentus).